The sequence spans 700 residues: Peroxisomal acyl-coenzyme A oxidase 3 (700 aa).

A2 is subject to N-acetylalanine. At T281 the chain carries Phosphothreonine. The Microbody targeting signal signature appears at 698–700 (SKL).

This sequence belongs to the acyl-CoA oxidase family. The cofactor is FAD.

It is found in the peroxisome. It carries out the reaction a 2,3-saturated acyl-CoA + O2 = a (2E)-enoyl-CoA + H2O2. The enzyme catalyses (2S)-pristanoyl-CoA + O2 = (2E)-pristenoyl-CoA + H2O2. The catalysed reaction is tetracosanoyl-CoA + O2 = (2E)-tetracosenoyl-CoA + H2O2. It catalyses the reaction hexadecanoyl-CoA + O2 = (2E)-hexadecenoyl-CoA + H2O2. It carries out the reaction hexadecanedioyl-CoA + O2 = (2E)-hexadecenedioyl-CoA + H2O2. The protein operates within lipid metabolism; peroxisomal fatty acid beta-oxidation. Its function is as follows. Oxidizes the CoA-esters of 2-methyl-branched fatty acids. In Homo sapiens (Human), this protein is Peroxisomal acyl-coenzyme A oxidase 3 (ACOX3).